A 216-amino-acid chain; its full sequence is MAADSQTSRLLTFTLLCLLWPQEAGAFPAMPLSSLFANAVLRAQHLHQLAADTYKEFERAYIPEGQRYSIQNAQTAFCFSETIPAPTGKEEAQQRSDMELLRFSLLLIQSWLGPVQFLSRIFTNSLMFGTSDRVYEKLKDLEEGIQALMQELEDGSPRVGQILKQTYDKFDTNMRSDDALLKNYGLLSCFKKDLHKAETYLRVMKCRRFVESSCAF.

The N-terminal stretch at 1 to 26 (MAADSQTSRLLTFTLLCLLWPQEAGA) is a signal peptide. Residue His-45 participates in Zn(2+) binding. Cys-78 and Cys-189 are disulfide-bonded. Ser-131 carries the phosphoserine modification. Glu-198 is a binding site for Zn(2+). An intrachain disulfide couples Cys-206 to Cys-214.

Belongs to the somatotropin/prolactin family.

The protein localises to the secreted. Functionally, plays an important role in growth control. Its major role in stimulating body growth is to stimulate the liver and other tissues to secrete IGF1. It stimulates both the differentiation and proliferation of myoblasts. It also stimulates amino acid uptake and protein synthesis in muscle and other tissues. The polypeptide is Somatotropin (GH1) (Mesocricetus auratus (Golden hamster)).